Here is a 390-residue protein sequence, read N- to C-terminus: 8-amino-7-oxononanoate synthase (390 aa).

R19 contacts substrate. Pyridoxal 5'-phosphate is bound at residue 106-107; it reads GY. Residue H131 coordinates substrate. Residues S176, H204, and T233 each coordinate pyridoxal 5'-phosphate. Residue K236 is modified to N6-(pyridoxal phosphate)lysine. T350 provides a ligand contact to substrate.

Belongs to the class-II pyridoxal-phosphate-dependent aminotransferase family. BioF subfamily. In terms of assembly, homodimer. It depends on pyridoxal 5'-phosphate as a cofactor.

It carries out the reaction 6-carboxyhexanoyl-[ACP] + L-alanine + H(+) = (8S)-8-amino-7-oxononanoate + holo-[ACP] + CO2. It functions in the pathway cofactor biosynthesis; biotin biosynthesis. In terms of biological role, catalyzes the decarboxylative condensation of pimeloyl-[acyl-carrier protein] and L-alanine to produce 8-amino-7-oxononanoate (AON), [acyl-carrier protein], and carbon dioxide. The sequence is that of 8-amino-7-oxononanoate synthase from Pseudomonas putida (strain ATCC 47054 / DSM 6125 / CFBP 8728 / NCIMB 11950 / KT2440).